A 391-amino-acid chain; its full sequence is Carbamoyl phosphate synthase small chain (391 aa).

Residues 1–199 (MVRISGFCCA…TWEFIEGPTT (199 aa)) form a CPSase region. L-glutamine-binding residues include serine 61, glycine 251, and glycine 253. The Glutamine amidotransferase type-1 domain maps to 203-388 (TVVAIDFGVK…VALMRDRQPT (186 aa)). Cysteine 279 functions as the Nucleophile in the catalytic mechanism. Positions 280, 283, 319, 321, and 322 each coordinate L-glutamine. Catalysis depends on residues histidine 361 and glutamate 363.

The protein belongs to the CarA family. In terms of assembly, composed of two chains; the small (or glutamine) chain promotes the hydrolysis of glutamine to ammonia, which is used by the large (or ammonia) chain to synthesize carbamoyl phosphate. Tetramer of heterodimers (alpha,beta)4.

It carries out the reaction hydrogencarbonate + L-glutamine + 2 ATP + H2O = carbamoyl phosphate + L-glutamate + 2 ADP + phosphate + 2 H(+). The enzyme catalyses L-glutamine + H2O = L-glutamate + NH4(+). It functions in the pathway amino-acid biosynthesis; L-arginine biosynthesis; carbamoyl phosphate from bicarbonate: step 1/1. Its pathway is pyrimidine metabolism; UMP biosynthesis via de novo pathway; (S)-dihydroorotate from bicarbonate: step 1/3. Its function is as follows. Small subunit of the glutamine-dependent carbamoyl phosphate synthetase (CPSase). CPSase catalyzes the formation of carbamoyl phosphate from the ammonia moiety of glutamine, carbonate, and phosphate donated by ATP, constituting the first step of 2 biosynthetic pathways, one leading to arginine and/or urea and the other to pyrimidine nucleotides. The small subunit (glutamine amidotransferase) binds and cleaves glutamine to supply the large subunit with the substrate ammonia. This chain is Carbamoyl phosphate synthase small chain, found in Synechococcus sp. (strain ATCC 27144 / PCC 6301 / SAUG 1402/1) (Anacystis nidulans).